Reading from the N-terminus, the 186-residue chain is Shikimate kinase (186 aa).

15-20 lines the ATP pocket; sequence GAGKTT. Position 19 (Thr19) interacts with Mg(2+). Positions 37, 61, and 83 each coordinate substrate. Arg121 is a binding site for ATP. Residue Arg140 coordinates substrate.

Belongs to the shikimate kinase family. In terms of assembly, monomer. It depends on Mg(2+) as a cofactor.

Its subcellular location is the cytoplasm. The enzyme catalyses shikimate + ATP = 3-phosphoshikimate + ADP + H(+). Its pathway is metabolic intermediate biosynthesis; chorismate biosynthesis; chorismate from D-erythrose 4-phosphate and phosphoenolpyruvate: step 5/7. In terms of biological role, catalyzes the specific phosphorylation of the 3-hydroxyl group of shikimic acid using ATP as a cosubstrate. The chain is Shikimate kinase from Psychrobacter arcticus (strain DSM 17307 / VKM B-2377 / 273-4).